A 145-amino-acid polypeptide reads, in one-letter code: uncharacterized protein (145 aa).

It to B.subtilis XkdJ.

This is an uncharacterized protein from Bacillus subtilis (strain 168).